A 539-amino-acid chain; its full sequence is MRVTGITPQDLKAYGINDIQEVVYNPDYDTLYREELDPSLEGYERGVLTDLGAVAVDTGIFTGRSPKDKYIVRDDTTRDTLWWSDNGKGKNDNKPLTPETWQHLKGLVTQQLSGKRLFIIDAFCGANPDSRLSVRFITEVAWQAHFVKNMFIRPSDDELEGFEPDFIVMNGAKCTNPDWQAQGLNSENFVAFNLTERMQLIGGTWYGGEMKKGMFSIMNYLLPLKGIASMHCSANVGEKGDVAVFFGLSGTGKTTLSTDPKRRLIGDDEHGWDDDGVFNFEGGCYAKTIRLSEEAEPDIYHAIRRDALLENVTVRDDGSIDFDDASKTENTRVSYPIYHIDNIVKPVSKAGHATKVIFLTADAFGVLPPVSRLTASQTQYHFLSGFTAKLAGTERGVTEPTPTFSACFGAAFLMLHPTQYSEVLVKRMQAAGAQAYLVNTGWNGTGKRISIKDTRAIIDAILNGSLDDAETFTLPLFNLAIPTSLPGVDERILDPRNTYASPEQWQEKAQQLAQLFISNFEKYTDTPAGAALVSAGPQR.

Substrate contacts are provided by Arg-64, Tyr-206, and Lys-212. Residues Lys-212, His-231, and 247 to 255 each bind ATP; that span reads GLSGTGKTT. Mn(2+) is bound by residues Lys-212 and His-231. Asp-268 is a Mn(2+) binding site. Residues Glu-296, Arg-332, 448–449, and Thr-454 contribute to the ATP site; that span reads RI. Substrate is bound at residue Arg-332.

Belongs to the phosphoenolpyruvate carboxykinase (ATP) family. Monomer. Mn(2+) serves as cofactor.

It is found in the cytoplasm. The enzyme catalyses oxaloacetate + ATP = phosphoenolpyruvate + ADP + CO2. It functions in the pathway carbohydrate biosynthesis; gluconeogenesis. Functionally, involved in the gluconeogenesis. Catalyzes the conversion of oxaloacetate (OAA) to phosphoenolpyruvate (PEP) through direct phosphoryl transfer between the nucleoside triphosphate and OAA. This is Phosphoenolpyruvate carboxykinase (ATP) from Cronobacter sakazakii (strain ATCC BAA-894) (Enterobacter sakazakii).